Reading from the N-terminus, the 532-residue chain is NMDA receptor synaptonuclear signaling and neuronal migration factor (532 aa).

Gly2 is lipidated: N-myristoyl glycine. A necessary and sufficient to elicit dendritic processes and synaptic contacts region spans residues 2–235; sequence GAAASRRRAL…FSFQTATTTM (234 aa). Disordered regions lie at residues 34 to 67 and 127 to 174; these read SQSHPENRNGADHLLADAYSGHEGSPEMQPAPHN and RRQR…GCAK. A compositionally biased stretch (basic and acidic residues) spans 38–48; sequence PENRNGADHLL. The segment covering 127 to 139 has biased composition (basic residues); sequence RRQRERHPHHHSQ. Residues 155–164 are compositionally biased toward polar residues; sequence PCQSWAGSRQ. A Phosphoserine modification is found at Ser206. Residues 247 to 252 carry the Nuclear localization signal motif; that stretch reads RKRRKR. Positions 275 to 315 are disordered; it reads RVKAQTFAERRERSFSRSWSDPTPMKADTSHDSRDSSDLQS. 2 positions are modified to phosphoserine: Ser292 and Ser294. The span at 302 to 311 shows a compositional bias: basic and acidic residues; the sequence is DTSHDSRDSS.

It belongs to the NSMF family. As to quaternary structure, interacts with KPNA1; the interaction occurs in a calcium-independent manner after synaptic NMDA receptor stimulation and is required for nuclear import of NSMF but is competed by CABP1. Interacts (via the central NLS-containing motif region) with CABP1 (via EF-hands 1 and 2); the interaction occurs in a calcium-dependent manner after synaptic NMDA receptor stimulation and prevents the nuclear import of NSMF. Cannot be competed by calmodulin. Proteolytically processed after NMDA receptor activation. Cleaved in a calcium-dependent and calpain-sensitive manner. Calpain cleavage is essential for the translocation process from dendrites to the nucleus. Expressed in the radiatum and pyramidale strata of the hippocampus (at protein level). Strongly expressed in the brain. Expressed in the sensory and motor cortex, hippocampus, olfactory bulb, thalamus and amygdala. In the olfactory bulb expressed in the granular cell layer, mitral cell layer and the glomerular layer. In the hippocampus highly expressed in the regions associated with neuronal cell types as CA1, CA2, CA3 and granule cells of the dentate gyrus. All isoforms have been detected in the molecular layers of the hippocampus.

It is found in the nucleus. It localises to the nucleus envelope. The protein resides in the nucleus membrane. Its subcellular location is the nucleus matrix. The protein localises to the cytoplasm. It is found in the cell cortex. It localises to the cytoskeleton. The protein resides in the cell membrane. Its subcellular location is the cell projection. The protein localises to the dendrite. It is found in the synapse. It localises to the synaptosome. The protein resides in the postsynaptic density. Its subcellular location is the membrane. In terms of biological role, couples NMDA-sensitive glutamate receptor signaling to the nucleus and triggers long-lasting changes in the cytoarchitecture of dendrites and spine synapse processes. Part of the cAMP response element-binding protein (CREB) shut-off signaling pathway. Stimulates outgrowth of olfactory axons and migration of gonadotropin-releasing hormone (GnRH) and luteinizing-hormone-releasing hormone (LHRH) neuronal cells. This is NMDA receptor synaptonuclear signaling and neuronal migration factor (Nsmf) from Rattus norvegicus (Rat).